The primary structure comprises 123 residues: Ribosome-binding factor A (123 aa).

It belongs to the RbfA family. Monomer. Binds 30S ribosomal subunits, but not 50S ribosomal subunits or 70S ribosomes.

It is found in the cytoplasm. Functionally, one of several proteins that assist in the late maturation steps of the functional core of the 30S ribosomal subunit. Associates with free 30S ribosomal subunits (but not with 30S subunits that are part of 70S ribosomes or polysomes). Required for efficient processing of 16S rRNA. May interact with the 5'-terminal helix region of 16S rRNA. The sequence is that of Ribosome-binding factor A from Lactobacillus johnsonii (strain CNCM I-12250 / La1 / NCC 533).